An 88-amino-acid chain; its full sequence is Small ribosomal subunit protein uS15c (88 aa).

The protein belongs to the universal ribosomal protein uS15 family. In terms of assembly, part of the 30S ribosomal subunit.

It is found in the plastid. The protein localises to the chloroplast. The protein is Small ribosomal subunit protein uS15c (rps15) of Marchantia polymorpha (Common liverwort).